Consider the following 459-residue polypeptide: Glycosyl hydrolase family 109 protein (459 aa).

The tat-type signal signal peptide spans 1–45 (MAGDESRSNPFSRRTLLRTSAAAGAGLGVAGLSTGYGAAQPVRPA). NAD(+)-binding positions include 70–71 (NR), Asp92, 141–144 (WEWH), 161–162 (EC), and Asn190. Residues Tyr219, Arg238, 250 to 253 (YPTH), and Tyr332 contribute to the substrate site. Residue Tyr250 participates in NAD(+) binding. Positions 440-459 (DFTRGRWQTPHPGVDSPKPA) are disordered.

It belongs to the Gfo/Idh/MocA family. Glycosyl hydrolase 109 subfamily. It depends on NAD(+) as a cofactor. In terms of processing, predicted to be exported by the Tat system. The position of the signal peptide cleavage has not been experimentally proven.

In terms of biological role, glycosidase. The sequence is that of Glycosyl hydrolase family 109 protein from Saccharopolyspora erythraea (strain ATCC 11635 / DSM 40517 / JCM 4748 / NBRC 13426 / NCIMB 8594 / NRRL 2338).